The following is a 334-amino-acid chain: RNA ligase 2 (334 aa).

Residues 1 to 234 are adenylyltransferase; the sequence is MFKKYSSLEN…KCKNSKFSEK (234 aa). AMP-binding residues include Glu-34, Lys-35, Ile-36, Asn-40, Arg-55, and Glu-99. Catalysis depends on Lys-35, which acts as the N6-AMP-lysine intermediate. Residues Ile-162, Leu-164, Asn-166, Glu-204, and Tyr-206 each coordinate Mg(2+). AMP contacts are provided by Lys-225 and Lys-227.

Belongs to the RNA ligase 2 family. The cofactor is Mg(2+). It depends on Mn(2+) as a cofactor.

The catalysed reaction is ATP + (ribonucleotide)n-3'-hydroxyl + 5'-phospho-(ribonucleotide)m = (ribonucleotide)n+m + AMP + diphosphate.. Its function is as follows. Repairs 3'-OH/5'-PO4 nicks in duplex RNA or RNA:DNA hybrid in which the broken 3'-OH strand is RNA. The nick ligation reaction entails three nucleotidyl transfer steps. In the first step, the RNA ligase reacts with ATP in the absence of nucleic acid to form a covalent ligase-AMP intermediate and release pyrophosphate. In step 2, the ligase-AMP binds to the nicked duplex nucleic acid and transfers the adenylate to the 5'-PO4 terminus to form an adenylylated nicked intermediate. In step 3, the RNA ligase directs the attack of the nick 3'-OH on the 5'-phosphoanhydride linkage, resulting in a repaired 3' - 5' phosphodiester and release of AMP. In Enterobacteria phage T4 (Bacteriophage T4), this protein is RNA ligase 2 (Y10A).